A 302-amino-acid polypeptide reads, in one-letter code: Light-independent protochlorophyllide reductase iron-sulfur ATP-binding protein (302 aa).

The span at 1 to 10 (MSTATISPSQ) shows a compositional bias: polar residues. The interval 1 to 21 (MSTATISPSQIGRGARPDGEG) is disordered. ATP contacts are provided by residues 46 to 51 (GIGKST) and Lys75. Ser50 is a Mg(2+) binding site. 2 residues coordinate [4Fe-4S] cluster: Cys131 and Cys165. Residues 216–217 (NR) and 240–242 (PAL) contribute to the ATP site.

Belongs to the NifH/BchL/ChlL family. Homodimer. Protochlorophyllide reductase is composed of three subunits; BchL, BchN and BchB. [4Fe-4S] cluster is required as a cofactor.

It catalyses the reaction chlorophyllide a + oxidized 2[4Fe-4S]-[ferredoxin] + 2 ADP + 2 phosphate = protochlorophyllide a + reduced 2[4Fe-4S]-[ferredoxin] + 2 ATP + 2 H2O. It participates in porphyrin-containing compound metabolism; bacteriochlorophyll biosynthesis (light-independent). In terms of biological role, component of the dark-operative protochlorophyllide reductase (DPOR) that uses Mg-ATP and reduced ferredoxin to reduce ring D of protochlorophyllide (Pchlide) to form chlorophyllide a (Chlide). This reaction is light-independent. The L component serves as a unique electron donor to the NB-component of the complex, and binds Mg-ATP. The polypeptide is Light-independent protochlorophyllide reductase iron-sulfur ATP-binding protein (Rubrivivax gelatinosus (strain NBRC 100245 / IL144)).